A 155-amino-acid polypeptide reads, in one-letter code: NADPH-dependent 7-cyano-7-deazaguanine reductase (155 aa).

The active-site Thioimide intermediate is Cys53. Asp60 serves as the catalytic Proton donor. Residues 75–77 (VES) and 94–95 (HE) contribute to the substrate site.

This sequence belongs to the GTP cyclohydrolase I family. QueF type 1 subfamily.

The protein localises to the cytoplasm. It carries out the reaction 7-aminomethyl-7-carbaguanine + 2 NADP(+) = 7-cyano-7-deazaguanine + 2 NADPH + 3 H(+). It participates in tRNA modification; tRNA-queuosine biosynthesis. In terms of biological role, catalyzes the NADPH-dependent reduction of 7-cyano-7-deazaguanine (preQ0) to 7-aminomethyl-7-deazaguanine (preQ1). This is NADPH-dependent 7-cyano-7-deazaguanine reductase from Brucella suis (strain ATCC 23445 / NCTC 10510).